The chain runs to 498 residues: UDP-N-acetylmuramate--L-alanine ligase (498 aa).

ATP is bound at residue 120-126; the sequence is GSHGKTT.

Belongs to the MurCDEF family.

The protein localises to the cytoplasm. The catalysed reaction is UDP-N-acetyl-alpha-D-muramate + L-alanine + ATP = UDP-N-acetyl-alpha-D-muramoyl-L-alanine + ADP + phosphate + H(+). Its pathway is cell wall biogenesis; peptidoglycan biosynthesis. Cell wall formation. The sequence is that of UDP-N-acetylmuramate--L-alanine ligase from Rickettsia typhi (strain ATCC VR-144 / Wilmington).